Reading from the N-terminus, the 372-residue chain is DNA replication and repair protein RecF (372 aa).

30-37 (GENGQGKT) is a binding site for ATP.

It belongs to the RecF family.

The protein resides in the cytoplasm. In terms of biological role, the RecF protein is involved in DNA metabolism; it is required for DNA replication and normal SOS inducibility. RecF binds preferentially to single-stranded, linear DNA. It also seems to bind ATP. This Anaeromyxobacter dehalogenans (strain 2CP-1 / ATCC BAA-258) protein is DNA replication and repair protein RecF.